Here is a 584-residue protein sequence, read N- to C-terminus: Probable lysosomal cobalamin transporter (584 aa).

10 helical membrane passes run 8 to 28 (LIWI…STFV), 46 to 66 (IFTL…VALV), 93 to 113 (TVVY…IVPF), 144 to 164 (TLVF…VPVA), 189 to 209 (ALTF…VIYS), 313 to 333 (LLGG…MLLT), 350 to 370 (ILGK…AASV), 376 to 396 (VIFI…IATI), 421 to 441 (ATVM…MIVV), and 509 to 529 (GIVD…VLLI).

This sequence belongs to the LIMR family. LMBRD1 subfamily.

It localises to the lysosome membrane. In terms of biological role, probable lysosomal cobalamin transporter. Required to export cobalamin from lysosomes allowing its conversion to cofactors. This is Probable lysosomal cobalamin transporter from Coccidioides immitis (strain RS) (Valley fever fungus).